Consider the following 56-residue polypeptide: uncharacterized protein (56 aa).

This is an uncharacterized protein from Saccharomyces cerevisiae (strain ATCC 204508 / S288c) (Baker's yeast).